The primary structure comprises 157 residues: Transcription elongation factor GreA (157 aa).

A coiled-coil region spans residues 47-75 (ENAEYDAAREKQGQIEDRITELENILSNA).

This sequence belongs to the GreA/GreB family.

Necessary for efficient RNA polymerase transcription elongation past template-encoded arresting sites. The arresting sites in DNA have the property of trapping a certain fraction of elongating RNA polymerases that pass through, resulting in locked ternary complexes. Cleavage of the nascent transcript by cleavage factors such as GreA or GreB allows the resumption of elongation from the new 3'terminus. GreA releases sequences of 2 to 3 nucleotides. The sequence is that of Transcription elongation factor GreA from Mycoplasmopsis pulmonis (strain UAB CTIP) (Mycoplasma pulmonis).